The sequence spans 929 residues: Collagen alpha-1(XII) chain (929 aa).

One can recognise a VWFA 1 domain in the interval 1 to 49 (DVEIFAVGVKDAVRSELEAIATPPTATHVYTVEDFDAFQRISFELTQSI). Fibronectin type-III domains lie at 67 to 156 (PPRD…LEVR), 158 to 250 (APRN…VGEP), 251 to 340 (KNLR…LQER), 342 to 432 (SPRD…ASPD), 434 to 521 (KIVK…LSPF), and 523 to 613 (APRS…TLRD). An N-linked (GlcNAc...) asparagine glycan is attached at asparagine 98. 3 O-linked (Xyl...) (chondroitin sulfate) serine glycosylation sites follow: serine 231, serine 324, and serine 415. The VWFA 2 domain occupies 633 to 805 (DIVLLVDGSW…SLLTNIVNDL (173 aa)). Residues 821 to 910 (PPSNLVTSEP…AGTETTLPIP (90 aa)) enclose the Fibronectin type-III 7 domain.

It belongs to the fibril-associated collagens with interrupted helices (FACIT) family. Trimer of identical chains each containing 190 kDa of non-triple-helical sequences. In terms of processing, the triple-helical tail is stabilized by disulfide bonds at each end. Prolines at the third position of the tripeptide repeating unit (G-X-Y) are hydroxylated in some or all of the chains.

It is found in the secreted. It localises to the extracellular space. Its subcellular location is the extracellular matrix. Type XII collagen interacts with type I collagen-containing fibrils, the COL1 domain could be associated with the surface of the fibrils, and the COL2 and NC3 domains may be localized in the perifibrillar matrix. Could play a developmental role in regeneration. The chain is Collagen alpha-1(XII) chain from Notophthalmus viridescens (Eastern newt).